The following is a 373-amino-acid chain: Phosphoserine aminotransferase (373 aa).

Arg41 provides a ligand contact to L-glutamate. Pyridoxal 5'-phosphate is bound by residues 75 to 76, Trp101, Thr152, Asp172, and Gln195; that span reads GT. Lys196 carries the post-translational modification N6-(pyridoxal phosphate)lysine. 236 to 237 is a pyridoxal 5'-phosphate binding site; it reads NT.

Belongs to the class-V pyridoxal-phosphate-dependent aminotransferase family. SerC subfamily. As to quaternary structure, homodimer. Pyridoxal 5'-phosphate serves as cofactor.

The protein resides in the cytoplasm. The catalysed reaction is O-phospho-L-serine + 2-oxoglutarate = 3-phosphooxypyruvate + L-glutamate. It catalyses the reaction 4-(phosphooxy)-L-threonine + 2-oxoglutarate = (R)-3-hydroxy-2-oxo-4-phosphooxybutanoate + L-glutamate. It participates in amino-acid biosynthesis; L-serine biosynthesis; L-serine from 3-phospho-D-glycerate: step 2/3. Catalyzes the reversible conversion of 3-phosphohydroxypyruvate to phosphoserine and of 3-hydroxy-2-oxo-4-phosphonooxybutanoate to phosphohydroxythreonine. The sequence is that of Phosphoserine aminotransferase from Lactobacillus helveticus (strain DPC 4571).